A 305-amino-acid polypeptide reads, in one-letter code: MQHPREENSIVVELEPSLATFIKQGFNNLVKWPLLNIGIVLSNTSTAVNEEWLTAVEHIPTMKIFYKHIHKILTREMGFLVYLKRSQSERDNYITLYDFDYYIIDKDTNSVTMVDKPTELKETLLHVFQEYRLKSSQTIELIAFSSGTVINEDIVSKLTFLDVEVFNREYNNVKTIIDPDFVSRSPFIVISPMGKLTFFVEVYSWFDFKSCFKDIIDFLEGALIANIHNHMIKVGDCDETVSSYNPESGMLFVNDLMTMNIVNFFGCNSRLESYHRFDMTKVDVELFIKALSDACKKILSASNRL.

The protein belongs to the poxviridae DNA-directed RNA polymerase 35 kDa subunit family. As to quaternary structure, the DNA-dependent RNA polymerase used for intermediate and late genes expression consists of eight subunits 147 kDa, 133 kDa, 35 kDa, 30 kDa, 22 kDa, 19 kDa, 18 kDa and 7 kDa totalling more than 500 kDa in mass. The same holoenzyme, with the addition of the transcription-specificity factor RAP94, is used for early gene expression.

It localises to the virion. It carries out the reaction RNA(n) + a ribonucleoside 5'-triphosphate = RNA(n+1) + diphosphate. Its function is as follows. Part of the DNA-dependent RNA polymerase which catalyzes the transcription of viral DNA into RNA using the four ribonucleoside triphosphates as substrates. Responsible for the transcription of early, intermediate and late genes. DNA-dependent RNA polymerase associates with the early transcription factor (ETF) thereby allowing the early genes transcription. Late transcription, and probably also intermediate transcription, require newly synthesized RNA polymerase. This chain is DNA-directed RNA polymerase 35 kDa subunit (RPO35), found in Rabbitpox virus (strain Utrecht) (RPV).